The following is a 493-amino-acid chain: ATP synthase subunit beta (493 aa).

An ATP-binding site is contributed by 169–176 (GGAGVGKT).

Belongs to the ATPase alpha/beta chains family. F-type ATPases have 2 components, CF(1) - the catalytic core - and CF(0) - the membrane proton channel. CF(1) has five subunits: alpha(3), beta(3), gamma(1), delta(1), epsilon(1). CF(0) has three main subunits: a(1), b(2) and c(9-12). The alpha and beta chains form an alternating ring which encloses part of the gamma chain. CF(1) is attached to CF(0) by a central stalk formed by the gamma and epsilon chains, while a peripheral stalk is formed by the delta and b chains.

The protein resides in the cell inner membrane. It catalyses the reaction ATP + H2O + 4 H(+)(in) = ADP + phosphate + 5 H(+)(out). Functionally, produces ATP from ADP in the presence of a proton gradient across the membrane. The catalytic sites are hosted primarily by the beta subunits. The sequence is that of ATP synthase subunit beta from Gluconacetobacter diazotrophicus (strain ATCC 49037 / DSM 5601 / CCUG 37298 / CIP 103539 / LMG 7603 / PAl5).